A 684-amino-acid polypeptide reads, in one-letter code: DNA-directed RNA polymerase subunit beta' (684 aa).

The Zn(2+) site is built by cysteine 69, cysteine 71, cysteine 87, and cysteine 90. Residues aspartate 489, aspartate 491, and aspartate 493 each coordinate Mg(2+).

This sequence belongs to the RNA polymerase beta' chain family. RpoC1 subfamily. As to quaternary structure, in plastids the minimal PEP RNA polymerase catalytic core is composed of four subunits: alpha, beta, beta', and beta''. When a (nuclear-encoded) sigma factor is associated with the core the holoenzyme is formed, which can initiate transcription. It depends on Mg(2+) as a cofactor. Requires Zn(2+) as cofactor.

Its subcellular location is the plastid. The protein localises to the chloroplast. The enzyme catalyses RNA(n) + a ribonucleoside 5'-triphosphate = RNA(n+1) + diphosphate. DNA-dependent RNA polymerase catalyzes the transcription of DNA into RNA using the four ribonucleoside triphosphates as substrates. In Marchantia polymorpha (Common liverwort), this protein is DNA-directed RNA polymerase subunit beta'.